Consider the following 456-residue polypeptide: NADPH-ferredoxin reductase FprA (456 aa).

FAD contacts are provided by S14, E40, L48, and V84. NADP(+)-binding positions include R110, 155–158, 199–200, and E211; these read NGNV and RR. Residues W359 and 366-368 contribute to the FAD site; that span reads GVI. G366 is an NADP(+) binding site.

It belongs to the ferredoxin--NADP reductase type 1 family. As to quaternary structure, monomer. The cofactor is FAD.

The enzyme catalyses 2 reduced [2Fe-2S]-[ferredoxin] + NADP(+) + H(+) = 2 oxidized [2Fe-2S]-[ferredoxin] + NADPH. Functionally, may serve as electron transfer protein and supply electrons to P450 systems. This Mycobacterium tuberculosis (strain CDC 1551 / Oshkosh) protein is NADPH-ferredoxin reductase FprA (fprA).